We begin with the raw amino-acid sequence, 281 residues long: Trypsin zeta (281 aa).

An N-terminal signal peptide occupies residues 1 to 23; it reads MSSSSWLGCLLAVLLSALALSQG. A propeptide spans 24 to 39 (activation peptide); sequence LPLLEDLDENSFPDGR. Residues 40–279 form the Peptidase S1 domain; that stretch reads IVGGYVTDIA…LRPWIDAVRA (240 aa). A disulfide bridge links Cys73 with Cys89. Catalysis depends on charge relay system residues His88 and Asp135. 2 cysteine pairs are disulfide-bonded: Cys199–Cys219 and Cys231–Cys255. Ser235 (charge relay system) is an active-site residue.

The protein belongs to the peptidase S1 family.

It localises to the secreted. The protein localises to the extracellular space. The catalysed reaction is Preferential cleavage: Arg-|-Xaa, Lys-|-Xaa.. This Drosophila erecta (Fruit fly) protein is Trypsin zeta (zetaTry).